Here is a 160-residue protein sequence, read N- to C-terminus: Deoxyuridine 5'-triphosphate nucleotidohydrolase (160 aa).

Substrate-binding positions include 76 to 78, Asn-89, and 93 to 95; these read RSG and TID. Residues 139-149 show a composition bias toward basic and acidic residues; it reads HTLSDTERGED. A disordered region spans residues 139–160; sequence HTLSDTERGEDGFGSTGHGSHQ. Gly residues predominate over residues 150–160; the sequence is GFGSTGHGSHQ.

This sequence belongs to the dUTPase family. Requires Mg(2+) as cofactor.

The catalysed reaction is dUTP + H2O = dUMP + diphosphate + H(+). It participates in pyrimidine metabolism; dUMP biosynthesis; dUMP from dCTP (dUTP route): step 2/2. Functionally, this enzyme is involved in nucleotide metabolism: it produces dUMP, the immediate precursor of thymidine nucleotides and it decreases the intracellular concentration of dUTP so that uracil cannot be incorporated into DNA. This chain is Deoxyuridine 5'-triphosphate nucleotidohydrolase, found in Beijerinckia indica subsp. indica (strain ATCC 9039 / DSM 1715 / NCIMB 8712).